The following is a 572-amino-acid chain: Proline--tRNA ligase (572 aa).

Belongs to the class-II aminoacyl-tRNA synthetase family. ProS type 1 subfamily. Homodimer.

The protein resides in the cytoplasm. The catalysed reaction is tRNA(Pro) + L-proline + ATP = L-prolyl-tRNA(Pro) + AMP + diphosphate. Its function is as follows. Catalyzes the attachment of proline to tRNA(Pro) in a two-step reaction: proline is first activated by ATP to form Pro-AMP and then transferred to the acceptor end of tRNA(Pro). As ProRS can inadvertently accommodate and process non-cognate amino acids such as alanine and cysteine, to avoid such errors it has two additional distinct editing activities against alanine. One activity is designated as 'pretransfer' editing and involves the tRNA(Pro)-independent hydrolysis of activated Ala-AMP. The other activity is designated 'posttransfer' editing and involves deacylation of mischarged Ala-tRNA(Pro). The misacylated Cys-tRNA(Pro) is not edited by ProRS. This is Proline--tRNA ligase from Leuconostoc mesenteroides subsp. mesenteroides (strain ATCC 8293 / DSM 20343 / BCRC 11652 / CCM 1803 / JCM 6124 / NCDO 523 / NBRC 100496 / NCIMB 8023 / NCTC 12954 / NRRL B-1118 / 37Y).